The following is a 522-amino-acid chain: Putative zinc finger protein 286B (522 aa).

The interval 1–30 (METDLAEMPEKGVLSSQDSPHFQEKSTEEG) is disordered. 10 C2H2-type zinc fingers span residues 244-266 (HKCN…QRVH), 272-294 (YTCN…QRTH), 299-321 (FECR…QRIH), 327-349 (YECN…QLIH), 355-377 (YECN…QRTH), 383-405 (YKCQ…QRVH), 411-433 (YECS…QRIH), 439-461 (YECS…QRIH), 467-489 (YKCS…QRTH), and 495-517 (FRCN…QRVH).

It belongs to the krueppel C2H2-type zinc-finger protein family.

The protein localises to the nucleus. May be involved in transcriptional regulation. This Homo sapiens (Human) protein is Putative zinc finger protein 286B (ZNF286B).